The following is a 168-amino-acid chain: Diphosphoinositol polyphosphate phosphohydrolase 1 (168 aa).

The residue at position 1 (methionine 1) is an N-acetylmethionine. Substrate contacts are provided by residues arginine 10, 18–20, and 39–41; these read KKR and SSR. A Nudix hydrolase domain is found at 17-144; it reads YKKRAACLCF…VQASYFETLR (128 aa). Positions 50 and 66 each coordinate Mg(2+). A Nudix box motif is present at residues 51–72; it reads GGMEPEEEPSVAAVREVCEEAG. Glutamate 69 serves as the catalytic Proton acceptor. A Mg(2+)-binding site is contributed by glutamate 70. Residues 89–91, arginine 115, and lysine 133 contribute to the substrate site; that span reads RKH.

Belongs to the Nudix hydrolase family. DIPP subfamily. Monomer. Requires Mg(2+) as cofactor. It depends on Mn(2+) as a cofactor. Zn(2+) serves as cofactor. Present in heart, lung, liver and spleen (at protein level). Widely expressed.

The protein resides in the cytoplasm. Its subcellular location is the nucleus. It catalyses the reaction diphospho-myo-inositol polyphosphate + H2O = myo-inositol polyphosphate + phosphate.. It carries out the reaction 5-diphospho-1D-myo-inositol 1,2,3,4,6-pentakisphosphate + H2O = 1D-myo-inositol hexakisphosphate + phosphate + H(+). The catalysed reaction is 3,5-bis(diphospho)-1D-myo-inositol 1,2,4,6-tetrakisphosphate + H2O = 3-diphospho-1D-myo-inositol 1,2,4,5,6-pentakisphosphate + phosphate + 2 H(+). The enzyme catalyses [phosphate](n+1) + n H2O = (n+1) phosphate + n H(+). It catalyses the reaction P(1),P(5)-bis(5'-adenosyl) pentaphosphate + H2O = ADP + ATP + 2 H(+). It carries out the reaction P(1),P(6)-bis(5'-adenosyl) hexaphosphate + H2O = 2 ATP + 2 H(+). The catalysed reaction is P(1),P(4)-bis(5'-adenosyl) tetraphosphate + H2O = AMP + ATP + 2 H(+). The enzyme catalyses a 5'-end (N(7)-methyl 5'-triphosphoguanosine)-ribonucleoside in mRNA + H2O = N(7)-methyl-GMP + a 5'-end diphospho-ribonucleoside in mRNA + 2 H(+). It catalyses the reaction a 5'-end (N(7)-methyl 5'-triphosphoguanosine)-ribonucleoside in mRNA + H2O = N(7)-methyl-GDP + a 5'-end phospho-ribonucleoside in mRNA + 2 H(+). Functionally, cleaves a beta-phosphate from the diphosphate groups in PP-InsP5 (diphosphoinositol pentakisphosphate) and [PP]2-InsP4 (bisdiphosphoinositol tetrakisphosphate), suggesting that it may play a role in signal transduction. InsP6 (inositol hexakisphosphate) is not a substrate. Also able to catalyze the hydrolysis of dinucleoside oligophosphates, with diadenosine 5',5'''-P1,P6-hexaphosphate (Ap6A) and diadenosine 5',5'''- P1,P5-pentaphosphate (Ap5A) being the preferred substrates. The major reaction products are ADP and p4a from Ap6A and ADP and ATP from Ap5A. Also able to hydrolyze 5- phosphoribose 1-diphosphate. Acts as a negative regulator of the ERK1/2 pathway. Acts as a decapping enzyme that can hydrolyze both monomethylated and unmethylated capped RNAs. Hydrolyzes monomethylated capped RNA after both the alpha- and beta-phosphates generating m7GMP + ppRNA and m7GDP + pRNA. Modulates the stability of a subset of mRNAs implicated in cell motility. Divalent cations zinc, magnesium and manganese determine its substrate specificity. Exhibits diphosphoinositol polyphosphate phosphohydrolase in the presence of magnesium ions, diadenosine hexaphosphate hydrolase activity in the presence of manganese ions and endopolyphosphatase activity in the presence of zinc ions. Plays an important role in limiting DNA damage and maintaining cell survival upon oxidative stress via its endopolyphosphatase activity. The polypeptide is Diphosphoinositol polyphosphate phosphohydrolase 1 (Mus musculus (Mouse)).